The sequence spans 381 residues: Pyrimidine monooxygenase RutA (381 aa).

FMN-binding positions include 66–67 (IK), Asn-132, Glu-141, 157–158 (RY), and Ser-207.

It belongs to the NtaA/SnaA/DszA monooxygenase family. RutA subfamily.

It catalyses the reaction uracil + FMNH2 + NADH + O2 = (Z)-3-ureidoacrylate + FMN + NAD(+) + H2O + H(+). It carries out the reaction thymine + FMNH2 + NADH + O2 = (Z)-2-methylureidoacrylate + FMN + NAD(+) + H2O + H(+). Catalyzes the pyrimidine ring opening between N-3 and C-4 by an unusual flavin hydroperoxide-catalyzed mechanism, adding oxygen atoms in the process to yield ureidoacrylate peracid, that immediately reacts with FMN forming ureidoacrylate and FMN-N(5)-oxide. The FMN-N(5)-oxide reacts spontaneously with NADH to produce FMN. Requires the flavin reductase RutF to regenerate FMN in vivo. This is Pyrimidine monooxygenase RutA from Methylobacterium radiotolerans (strain ATCC 27329 / DSM 1819 / JCM 2831 / NBRC 15690 / NCIMB 10815 / 0-1).